Consider the following 158-residue polypeptide: Non-secretory ribonuclease (158 aa).

The first 27 residues, 1 to 27 (MVPKLFTSQICLLLLLGLLGVEGSLHA), serve as a signal peptide directing secretion. The Proton acceptor role is filled by histidine 42. 4 cysteine pairs are disulfide-bonded: cysteine 50/cysteine 110, cysteine 64/cysteine 121, cysteine 82/cysteine 136, and cysteine 89/cysteine 98. Tyrosine 60 is modified (3'-nitrotyrosine). A substrate-binding site is contributed by 65-69 (KNQNT). Asparagine 86, asparagine 92, and asparagine 111 each carry an N-linked (GlcNAc...) asparagine glycan. Residue histidine 153 is the Proton donor of the active site.

The protein belongs to the pancreatic ribonuclease family. Interacts with and forms a tight 1:1 complex with RNH1. Dimerization of two such complexes may occur.

It localises to the lysosome. It is found in the cytoplasmic granule. It carries out the reaction an [RNA] containing cytidine + H2O = an [RNA]-3'-cytidine-3'-phosphate + a 5'-hydroxy-ribonucleotide-3'-[RNA].. The catalysed reaction is an [RNA] containing uridine + H2O = an [RNA]-3'-uridine-3'-phosphate + a 5'-hydroxy-ribonucleotide-3'-[RNA].. Functionally, this is a non-secretory ribonuclease. It is a pyrimidine specific nuclease with a slight preference for U. Cytotoxin and helminthotoxin. Possesses a wide variety of biological activities. This chain is Non-secretory ribonuclease (RNASE2), found in Aotus trivirgatus (Three-striped night monkey).